An 85-amino-acid chain; its full sequence is MRTAYWVMVMMMVGITAPLSEGRKLNDAIRGLVADYLTPQLLQSLVSAPYPEFQLDDPNLEIPVCIWKVCPPIPWRRRDLKKRNK.

A signal peptide spans 1–22 (MRTAYWVMVMMMVGITAPLSEG). Positions 23 to 60 (RKLNDAIRGLVADYLTPQLLQSLVSAPYPEFQLDDPNL) are excised as a propeptide. A disulfide bridge connects residues Cys65 and Cys70. Residues 76-85 (RRRDLKKRNK) constitute a propeptide that is removed on maturation.

This sequence belongs to the conotoxin C superfamily. Expressed by the venom duct.

Its subcellular location is the secreted. In terms of biological role, acts as an agonist of neurotensin receptors. It binds to human neurotensin type 1 receptor (NTSR1), rat neurotensin types 1 and 2 receptors (NTSR1/NTSR2) and mouse neurotensin type 3 receptor (SORT1). In Conus litteratus (Lettered cone), this protein is Contulakin-Lt1.